The chain runs to 62 residues: MTIAFQLAVFALIVTSSILLISVPVVFASPDGWSGNKNVVFSGTSLWIGLVFLVGILNSLIS.

2 helical membrane passes run A8–A28 and F41–I61.

It belongs to the PsbZ family. PSII is composed of 1 copy each of membrane proteins PsbA, PsbB, PsbC, PsbD, PsbE, PsbF, PsbH, PsbI, PsbJ, PsbK, PsbL, PsbM, PsbT, PsbY, PsbZ, Psb30/Ycf12, at least 3 peripheral proteins of the oxygen-evolving complex and a large number of cofactors. It forms dimeric complexes.

The protein localises to the plastid. It is found in the chloroplast thylakoid membrane. In terms of biological role, may control the interaction of photosystem II (PSII) cores with the light-harvesting antenna, regulates electron flow through the 2 photosystem reaction centers. PSII is a light-driven water plastoquinone oxidoreductase, using light energy to abstract electrons from H(2)O, generating a proton gradient subsequently used for ATP formation. This Cucumis sativus (Cucumber) protein is Photosystem II reaction center protein Z.